The sequence spans 592 residues: Aspartate--tRNA(Asp/Asn) ligase (592 aa).

Glu175 contributes to the L-aspartate binding site. Residues 199–202 (QLFK) form an aspartate region. Arg221 lines the L-aspartate pocket. ATP is bound by residues 221–223 (RDE) and Gln230. His450 serves as a coordination point for L-aspartate. Glu483 contacts ATP. Arg490 is an L-aspartate binding site. Position 535-538 (535-538 (GLDR)) interacts with ATP.

It belongs to the class-II aminoacyl-tRNA synthetase family. Type 1 subfamily. Homodimer.

The protein localises to the cytoplasm. It catalyses the reaction tRNA(Asx) + L-aspartate + ATP = L-aspartyl-tRNA(Asx) + AMP + diphosphate. In terms of biological role, aspartyl-tRNA synthetase with relaxed tRNA specificity since it is able to aspartylate not only its cognate tRNA(Asp) but also tRNA(Asn). Reaction proceeds in two steps: L-aspartate is first activated by ATP to form Asp-AMP and then transferred to the acceptor end of tRNA(Asp/Asn). The chain is Aspartate--tRNA(Asp/Asn) ligase from Acinetobacter baumannii (strain ATCC 17978 / DSM 105126 / CIP 53.77 / LMG 1025 / NCDC KC755 / 5377).